A 286-amino-acid polypeptide reads, in one-letter code: Pyridoxal kinase PdxY (286 aa).

Serine 8 contacts substrate. Residues aspartate 110 and glutamate 147 each contribute to the ATP site. A substrate-binding site is contributed by aspartate 223.

The protein belongs to the pyridoxine kinase family. PdxY subfamily. In terms of assembly, homodimer. The cofactor is Mg(2+).

The enzyme catalyses pyridoxal + ATP = pyridoxal 5'-phosphate + ADP + H(+). It participates in cofactor metabolism; pyridoxal 5'-phosphate salvage; pyridoxal 5'-phosphate from pyridoxal: step 1/1. In terms of biological role, pyridoxal kinase involved in the salvage pathway of pyridoxal 5'-phosphate (PLP). Catalyzes the phosphorylation of pyridoxal to PLP. The sequence is that of Pyridoxal kinase PdxY from Granulibacter bethesdensis (strain ATCC BAA-1260 / CGDNIH1).